Consider the following 546-residue polypeptide: uncharacterized protein (546 aa).

The protein belongs to the IIV-6 098R family.

This is an uncharacterized protein from Aedes vexans (Inland floodwater mosquito).